The following is a 395-amino-acid chain: Multidrug resistance protein MdtL (395 aa).

The next 12 helical transmembrane spans lie at 4-24, 42-62, 69-89, 93-113, 131-151, 158-178, 217-237, 247-267, 271-291, 295-315, 328-350, and 355-377; these read FLLC…MYLV, IAFS…GKIA, PVAI…SRAS, LFLS…VVAF, LLNG…HLIM, SLFY…LFIL, VSVI…VMGF, ALTA…LGLF, TLML…SLAH, VTLF…GVAM, VASS…LAAI, and AMNM…IFSV.

This sequence belongs to the major facilitator superfamily. DHA1 family. MdtL (TC 2.A.1.2.22) subfamily.

It is found in the cell inner membrane. This chain is Multidrug resistance protein MdtL, found in Salmonella newport (strain SL254).